Reading from the N-terminus, the 304-residue chain is Ribosomal RNA large subunit methyltransferase F (304 aa).

It belongs to the methyltransferase superfamily. METTL16/RlmF family.

The protein resides in the cytoplasm. It catalyses the reaction adenosine(1618) in 23S rRNA + S-adenosyl-L-methionine = N(6)-methyladenosine(1618) in 23S rRNA + S-adenosyl-L-homocysteine + H(+). In terms of biological role, specifically methylates the adenine in position 1618 of 23S rRNA. This Klebsiella pneumoniae (strain 342) protein is Ribosomal RNA large subunit methyltransferase F.